The following is a 1210-amino-acid chain: ATPase family AAA domain-containing protein At1g05910 (1210 aa).

Residues 1-11 (MHPKRSSQGDG) are compositionally biased toward polar residues. Disordered regions lie at residues 1 to 32 (MHPK…LHGR) and 63 to 291 (LHKG…RTDD). Over residues 97 to 109 (DYTDSSGAEDEDM) the composition is skewed to acidic residues. Over residues 130–146 (SRKDMDAELAPRREGLR) the composition is skewed to basic and acidic residues. Residues 167–226 (DTSEEKDGQDETENGNELDDADDGENEVEAEDEGNGEDEGDGEDEGEEDGDDDEEGDEEQ) show a composition bias toward acidic residues. Positions 227 to 244 (EGRKRYDLRNRAEVRRMP) are enriched in basic and acidic residues. Basic residues predominate over residues 276 to 286 (GGSRPHKRHRF). 422–429 (GPPGTGKT) is an ATP binding site. The tract at residues 856-883 (LNGKPDGPQPLPELPKVPKEPTGPKPAE) is disordered. The region spanning 897 to 1000 (RLRMCLRDVC…DVVHGMLSQM (104 aa)) is the Bromo domain. The span at 1057 to 1070 (DRDYEGLKKPKKTT) shows a compositional bias: basic and acidic residues. A disordered region spans residues 1057–1151 (DRDYEGLKKP…EISSRTESVK (95 aa)). Polar residues predominate over residues 1080-1090 (DKSQNQDSGQE). Composition is skewed to basic and acidic residues over residues 1108 to 1123 (DGDR…KEAS) and 1138 to 1151 (KSDK…ESVK).

The protein belongs to the AAA ATPase family.

The chain is ATPase family AAA domain-containing protein At1g05910 from Arabidopsis thaliana (Mouse-ear cress).